A 310-amino-acid chain; its full sequence is tRNA dimethylallyltransferase (310 aa).

14 to 21 contacts ATP; the sequence is GPTASGKS. Substrate is bound at residue 16-21; that stretch reads TASGKS. 2 interaction with substrate tRNA regions span residues 39–42 and 163–167; these read DSMQ and QRIVR.

It belongs to the IPP transferase family. As to quaternary structure, monomer. The cofactor is Mg(2+).

It catalyses the reaction adenosine(37) in tRNA + dimethylallyl diphosphate = N(6)-dimethylallyladenosine(37) in tRNA + diphosphate. Its function is as follows. Catalyzes the transfer of a dimethylallyl group onto the adenine at position 37 in tRNAs that read codons beginning with uridine, leading to the formation of N6-(dimethylallyl)adenosine (i(6)A). The sequence is that of tRNA dimethylallyltransferase from Brucella suis biovar 1 (strain 1330).